A 298-amino-acid polypeptide reads, in one-letter code: Putative S-adenosyl-L-methionine-dependent methyltransferase MSMEG_1480/MSMEI_1444 (298 aa).

Residues Asp-127 and 156–157 (DL) each bind S-adenosyl-L-methionine.

Belongs to the UPF0677 family.

Functionally, exhibits S-adenosyl-L-methionine-dependent methyltransferase activity. The polypeptide is Putative S-adenosyl-L-methionine-dependent methyltransferase MSMEG_1480/MSMEI_1444 (Mycolicibacterium smegmatis (strain ATCC 700084 / mc(2)155) (Mycobacterium smegmatis)).